A 342-amino-acid chain; its full sequence is Methionyl-tRNA formyltransferase (342 aa).

A (6S)-5,6,7,8-tetrahydrofolate-binding site is contributed by 108–111 (SLLP).

It belongs to the Fmt family.

It catalyses the reaction L-methionyl-tRNA(fMet) + (6R)-10-formyltetrahydrofolate = N-formyl-L-methionyl-tRNA(fMet) + (6S)-5,6,7,8-tetrahydrofolate + H(+). Functionally, attaches a formyl group to the free amino group of methionyl-tRNA(fMet). The formyl group appears to play a dual role in the initiator identity of N-formylmethionyl-tRNA by promoting its recognition by IF2 and preventing the misappropriation of this tRNA by the elongation apparatus. This chain is Methionyl-tRNA formyltransferase, found in Prochlorococcus marinus (strain MIT 9303).